A 354-amino-acid polypeptide reads, in one-letter code: Fructose-1,6-bisphosphatase class 1 (354 aa).

Mg(2+) contacts are provided by glutamate 112, aspartate 134, leucine 136, and aspartate 137. Residues 137–140 (DGSS), asparagine 229, tyrosine 257, and lysine 287 contribute to the substrate site. Residue glutamate 293 participates in Mg(2+) binding.

Belongs to the FBPase class 1 family. Homotetramer. The cofactor is Mg(2+).

It is found in the cytoplasm. It carries out the reaction beta-D-fructose 1,6-bisphosphate + H2O = beta-D-fructose 6-phosphate + phosphate. It participates in carbohydrate biosynthesis; Calvin cycle. This chain is Fructose-1,6-bisphosphatase class 1, found in Trichodesmium erythraeum (strain IMS101).